A 189-amino-acid polypeptide reads, in one-letter code: Peptidyl-tRNA hydrolase (189 aa).

Tyr16 is a tRNA binding site. His21 functions as the Proton acceptor in the catalytic mechanism. Positions 67, 69, and 115 each coordinate tRNA.

It belongs to the PTH family. In terms of assembly, monomer.

It is found in the cytoplasm. The catalysed reaction is an N-acyl-L-alpha-aminoacyl-tRNA + H2O = an N-acyl-L-amino acid + a tRNA + H(+). In terms of biological role, hydrolyzes ribosome-free peptidyl-tRNAs (with 1 or more amino acids incorporated), which drop off the ribosome during protein synthesis, or as a result of ribosome stalling. Functionally, catalyzes the release of premature peptidyl moieties from peptidyl-tRNA molecules trapped in stalled 50S ribosomal subunits, and thus maintains levels of free tRNAs and 50S ribosomes. This is Peptidyl-tRNA hydrolase from Legionella pneumophila (strain Lens).